A 479-amino-acid chain; its full sequence is Acetylcholine receptor subunit alpha-type acr-15 (479 aa).

A signal peptide spans 1–18 (MLLPILLHFLLLITQLNG). Residues 19–230 (SPAEVRLIND…HLRRRTLYYS (212 aa)) are Extracellular-facing. Residues Asn60 and Asn92 are each glycosylated (N-linked (GlcNAc...) asparagine). Cys146 and Cys160 form a disulfide bridge. N-linked (GlcNAc...) asparagine glycosylation is present at Asn200. Residues Cys208 and Cys209 are joined by a disulfide bond. Residues 231–251 (FNLIAPVLLTMILVILGFTVS) form a helical membrane-spanning segment. Residues 252 to 257 (PETCEK) lie on the Cytoplasmic side of the membrane. Residues 258 to 278 (VGLQISVSLAICIFLTIMSEL) form a helical membrane-spanning segment. Over 279–285 (TPQTSEA) the chain is Extracellular. Residues 286 to 306 (VPLLGVFFHTCNFISVLATSF) traverse the membrane as a helical segment. The Cytoplasmic portion of the chain corresponds to 307 to 453 (TVYVQSFHFR…WRFAAIVVDR (147 aa)). A helical transmembrane segment spans residues 454–474 (LCLLAFSLLIVVVSIIIALRA). Topologically, residues 475–479 (PYLFA) are extracellular.

It belongs to the ligand-gated ion channel (TC 1.A.9) family. Acetylcholine receptor (TC 1.A.9.1) subfamily. In terms of tissue distribution, expressed in interneurons, motor neurons, pharyngeal neurons and muscles.

Its subcellular location is the cell membrane. It localises to the postsynaptic cell membrane. Functionally, after binding acetylcholine, the AChR responds by an extensive change in conformation that affects all subunits and leads to opening of an ion-conducting channel across the plasma membrane. Activity is required in glutamatergic neurons to mediate nicotine-induced and nicotine-motivated behaviors. The polypeptide is Acetylcholine receptor subunit alpha-type acr-15 (Caenorhabditis elegans).